A 212-amino-acid polypeptide reads, in one-letter code: Large ribosomal subunit protein uL3 (212 aa).

The residue at position 154 (Gln-154) is an N5-methylglutamine.

This sequence belongs to the universal ribosomal protein uL3 family. As to quaternary structure, part of the 50S ribosomal subunit. Forms a cluster with proteins L14 and L19. In terms of processing, methylated by PrmB.

Its function is as follows. One of the primary rRNA binding proteins, it binds directly near the 3'-end of the 23S rRNA, where it nucleates assembly of the 50S subunit. This Hydrogenovibrio crunogenus (strain DSM 25203 / XCL-2) (Thiomicrospira crunogena) protein is Large ribosomal subunit protein uL3.